The primary structure comprises 1062 residues: Isoleucine--tRNA ligase (1062 aa).

The 'HIGH' region motif lies at Pro-47–Thr-57. A 'KMSKS' region motif is present at residues Lys-591–Ser-595. Lys-594 provides a ligand contact to ATP.

Belongs to the class-I aminoacyl-tRNA synthetase family. IleS type 2 subfamily. As to quaternary structure, monomer. Zn(2+) is required as a cofactor.

Its subcellular location is the cytoplasm. The enzyme catalyses tRNA(Ile) + L-isoleucine + ATP = L-isoleucyl-tRNA(Ile) + AMP + diphosphate. Its function is as follows. Catalyzes the attachment of isoleucine to tRNA(Ile). As IleRS can inadvertently accommodate and process structurally similar amino acids such as valine, to avoid such errors it has two additional distinct tRNA(Ile)-dependent editing activities. One activity is designated as 'pretransfer' editing and involves the hydrolysis of activated Val-AMP. The other activity is designated 'posttransfer' editing and involves deacylation of mischarged Val-tRNA(Ile). The protein is Isoleucine--tRNA ligase of Methanospirillum hungatei JF-1 (strain ATCC 27890 / DSM 864 / NBRC 100397 / JF-1).